Consider the following 875-residue polypeptide: Protein SEY1 (875 aa).

Residues M1 to Q749 are Cytoplasmic-facing. A GB1/RHD3-type G domain is found at G49–A307. GTP is bound at residue G59 to S66. Positions S482 to E506 form a coiled coil. The tract at residues L676 to D704 is disordered. Over residues A690–D704 the composition is skewed to acidic residues. A helical transmembrane segment spans residues V750–L770. The Lumenal segment spans residues R771–P773. A helical membrane pass occupies residues A774–L794. Residues W795 to F875 lie on the Cytoplasmic side of the membrane. A disordered region spans residues M831 to F875. Residues A839–D864 are compositionally biased toward basic and acidic residues. Residues V865–F875 show a composition bias toward acidic residues.

Belongs to the TRAFAC class dynamin-like GTPase superfamily. GB1/RHD3 GTPase family. RHD3 subfamily.

The protein resides in the endoplasmic reticulum membrane. Functionally, cooperates with the reticulon proteins and tubule-shaping DP1 family proteins to generate and maintain the structure of the tubular endoplasmic reticulum network. Has GTPase activity, which is required for its function in ER organization. The protein is Protein SEY1 of Ajellomyces dermatitidis (strain ER-3 / ATCC MYA-2586) (Blastomyces dermatitidis).